The following is a 1475-amino-acid chain: MAVRPTRRCLLALLLCFAWWAMAVVASKQGAGCPSRCLCFRTTVRCMHLLLEAVPAVAPQTSILDLRFNRIREIQPGAFRRLRSLNTLLLNNNQIKKIPNGAFEDLENLKYLYLYKNEIQSIDRQAFKGLASLEQLYLHFNQIETLDPESFQHLPKLERLFLHNNRITHLVPGTFSQLESMKRLRLDSNALHCDCEILWLADLLKTYAQSGNAQAAATCEYPRRIQGRSVATITPEELNCERPRITSEPQDADVTSGNTVYFTCRAEGNPKPEIIWLRNNNELSMKTDSRLNLLDDGTLMIQNTQEADEGVYQCMAKNVAGEAKTQEVTLRYLGSPARPTFVIQPQNTEVLVGESVTLECSATGHPLPQITWTRGDRTPLPIDPRVNITPSGGLYIQNVAQSDSGEYTCFASNSVDSIHATAFIIVQALPQFTVTPQSRVVIEGQTVDFQCAAKGHPQPVIAWTKGGSQLSVDRRHLVLSSGTLRISGVALHDQGQYECQAVNIIGSQKVVAHLTVQPRVTPVFASIPSDMTVEVGTNVQLPCSSQGEPEPAITWNKDGVQVTESGKFHISPEGFLTINDVGTADAGRYECVARNTIGYASVSMVLSVNVPDVSRNGDPYVATSIVEAIATVDRAINSTRTHLFDSRPRSPNDLLALFRYPRDPYTVGQARAGEIFERTLQLIQEHVQHGLMVDLNGTSYHYNDLVSPQYLSLIANLSGCTAHRRVNNCSDMCFHQKYRTHDGTCNNLQHPMWGASLTAFERLLKAVYENGFNTPRGINSQRQYNGHVLPMPRLVSTTLIGTEVITPDEQFTHMLMQWGQFLDHDLDSTVVALSQARFSDGQHCSSVCSNDPPCFSVMIPPNDPRVRSGARCMFFVRSSPVCGSGMTSLLMNSVYPREQINQLTSYIDASNVYGSTDHEARSIRDLASHRGLLRQGIVQRSGKPLLPFATGPPTECMRDENESPIPCFLAGDHRANEQLGLTSMHTLWFREHNRIAAELLKLNPHWDGDTVYHETRKIVGAEIQHITYRHWLPKILGEVGMKMLGEYRGYDPSVNAGIFNAFATAAFRFGHTLINPLLYRLDENFEPIPQGHVPLHKAFFSPFRIVNEGGIDPLLRGLFGVAGKMRIPSQLLNTELTERLFSMAHTVALDLAAINIQRGRDHGIPPYHDYRVYCNLSAAYTFEDLKNEIKSPVIREKLQRLYGSTLNIDLFPALMVEDLVPGSRLGPTLMCLLSTQFRRLRDGDRLWYENPGVFSPAQLTQLKQTSLARILCDNSDNITRVQQDVFRVAEFPHGYSSCEDIPRVDLRVWQDCCEDCRTRGQFNAFSYHFRGRRSLEFSYEDDKPTKRARWRKALSVKHGKHLSNATSATHEHLEGPATNDLKEFVLEMQKIITDLRKQINSLESRLSTTECVDDSGESHGGNTKWKKDPCTVCECKNGQITCFVEACQPAACPQPVKVEGACCPVCLKNTAEEKP.

An N-terminal signal peptide occupies residues 1-23 (MAVRPTRRCLLALLLCFAWWAMA). Residues 24-60 (VVASKQGAGCPSRCLCFRTTVRCMHLLLEAVPAVAPQ) enclose the LRRNT domain. Cystine bridges form between Cys33/Cys39 and Cys37/Cys46. LRR repeat units follow at residues 58 to 81 (APQT…AFRR), 82 to 105 (LRSL…AFED), 107 to 129 (ENLK…AFKG), 130 to 153 (LASL…SFQH), 154 to 177 (LPKL…TFSQ), and 179 to 201 (ESMK…LWLA). The LRRCT domain maps to 189–241 (NALHCDCEILWLADLLKTYAQSGNAQAAATCEYPRRIQGRSVATITPEELNCE). 6 cysteine pairs are disulfide-bonded: Cys193–Cys240, Cys195–Cys219, Cys264–Cys314, Cys360–Cys409, Cys451–Cys499, and Cys543–Cys591. Ig-like C2-type domains are found at residues 243 to 329 (PRIT…QEVT), 339 to 425 (PTFV…AFII), 430 to 517 (PQFT…LTVQ), and 518 to 607 (PRVT…MVLS). Asn387 carries N-linked (GlcNAc...) asparagine glycosylation. The LRR 7 repeat unit spans residues 402–425 (SDSGEYTCFASNSVDSIHATAFII). Asn637, Asn696, Asn716, and Asn728 each carry an N-linked (GlcNAc...) asparagine glycan. 4 cysteine pairs are disulfide-bonded: Cys720–Cys882, Cys729–Cys745, Cys844–Cys854, and Cys848–Cys872. Asp823 contributes to the heme b binding site. Residue His824 is the Proton acceptor of the active site. Asp825 provides a ligand contact to Ca(2+). Ca(2+) is bound by residues Thr904, Tyr906, Asp908, and Ser910. Cys956 and Cys967 are joined by a disulfide. Asn961 carries an N-linked (GlcNAc...) asparagine glycan. The heme b site is built by Glu977 and His1071. One copy of the LRR 8 repeat lies at 1148 to 1172 (ALDLAAINIQRGRDHGIPPYHDYRV). The residue at position 1173 (Tyr1173) is a Phosphotyrosine. 2 cysteine pairs are disulfide-bonded: Cys1174–Cys1231 and Cys1272–Cys1298. Asn1175 carries N-linked (GlcNAc...) asparagine glycosylation. A Phosphoserine modification is found at Ser1177. The stretch at 1267–1288 (LARILCDNSDNITRVQQDVFRV) is one LRR 9 repeat. N-linked (GlcNAc...) asparagine glycosylation is found at Asn1277 and Asn1364. The interval 1312–1407 (CCEDCRTRGQ…QINSLESRLS (96 aa)) is required in homotrimerization. The VWFC domain occupies 1409-1467 (TECVDDSGESHGGNTKWKKDPCTVCECKNGQITCFVEACQPAACPQPVKVEGACCPVCL).

The protein belongs to the peroxidase family. XPO subfamily. As to quaternary structure, homotrimer; disulfide-linked. The homotrimer form is predominant. Homooligomer; disulfide-linked. Oligomerization occurs intracellularly before C-terminal proteolytic cleavage. Interacts with PXDNL; this interaction inhibits the peroxidase activity of PXDN. The cofactor is Ca(2+). Requires heme b as cofactor. Processed by FURIN and the proteolytic processing largely depends on the peroxidase activity of PXDN. The proteolytic cleavage occurs after intracellular homotrimerization and releases into the extracellular matrix a large, catalytically active fragment and a smaller fragment consisting primarily of the C-terminal VWFC domain. The processing enhances both peroxidase activity and sulfilimine cross-links formation. Highly expressed in the cardiovascular system. In the embryo, expressed in the corneal epithelial layer. In the adult eyes, expressed in the corneal and lens epithelium. Expressed in lung.

It localises to the secreted. It is found in the extracellular space. Its subcellular location is the extracellular matrix. The protein localises to the endoplasmic reticulum. The protein resides in the cell surface. It localises to the basement membrane. The catalysed reaction is L-lysyl-[collagen] + L-methionyl-[collagen] + H2O2 = [collagen]-L-lysyl-N-S-L-methionyl-[collagen] + 2 H2O + H(+). It catalyses the reaction bromide + H2O2 = hypobromite + H2O. The enzyme catalyses L-lysyl-[collagen] + L-methionyl-[collagen] + hypobromite = [collagen]-L-lysyl-N-S-L-methionyl-[collagen] + bromide + H2O + H(+). It carries out the reaction (5R)-5-hydroxy-L-lysyl-[collagen] + L-methionyl-[collagen] + hypobromite = [collagen]-(5R)-5-hydroxy-L-lysyl-N-S-L-methionyl-[collagen] + bromide + H2O + H(+). The catalysed reaction is (5R)-5-hydroxy-L-lysyl-[collagen] + L-methionyl-[collagen] + H2O2 = [collagen]-(5R)-5-hydroxy-L-lysyl-N-S-L-methionyl-[collagen] + 2 H2O + H(+). It catalyses the reaction L-tyrosyl-[protein] + bromide + H2O2 + H(+) = 3-bromo-L-tyrosyl-[protein] + 2 H2O. The enzyme catalyses hypobromite + L-tyrosyl-[protein] + H(+) = 3-bromo-L-tyrosyl-[protein] + H2O. Thiocyanate inhibits the formation of 3-bromotyrosine. Functionally, catalyzes the two-electron oxidation of bromide by hydrogen peroxide and generates hypobromite as a reactive intermediate which mediates the formation of sulfilimine cross-links between methionine and hydroxylysine residues within an uncross-linked collagen IV/COL4A1 NC1 hexamer. In turns, directly contributes to the collagen IV network-dependent fibronectin/FN and laminin assembly, which is required for full extracellular matrix (ECM)-mediated signaling. Thus, sulfilimine cross-links are essential for growth factor-induced cell proliferation and survival in endothelial cells, an event essential to basement membrane integrity. In addition, through the bromide oxidation, may promote tubulogenesis and induce angiogenesis through ERK1/2, Akt, and FAK pathways. Moreover brominates alpha2 collagen IV chain/COL4A2 at 'Tyr-1480' and leads to bromine enrichment of the basement membranes. In vitro, can also catalyze the two-electron oxidation of thiocyanate and iodide and these two substrates could effectively compete with bromide and thus inhibit the formation of sulfilimine bonds. Binds laminins. May play a role in the organization of eyeball structure and lens development during eye development. In Mus musculus (Mouse), this protein is Peroxidasin homolog.